Consider the following 257-residue polypeptide: GTP cyclohydrolase 1 type 2 homolog (257 aa).

Residues His65, Asp103, His221, and Glu224 each coordinate a divalent metal cation.

The protein belongs to the GTP cyclohydrolase I type 2/NIF3 family. As to quaternary structure, homohexamer.

The protein is GTP cyclohydrolase 1 type 2 homolog (ykiD) of Lactococcus lactis subsp. lactis (strain IL1403) (Streptococcus lactis).